A 218-amino-acid polypeptide reads, in one-letter code: Probable nicotinate-nucleotide adenylyltransferase (218 aa).

It belongs to the NadD family.

It carries out the reaction nicotinate beta-D-ribonucleotide + ATP + H(+) = deamido-NAD(+) + diphosphate. It functions in the pathway cofactor biosynthesis; NAD(+) biosynthesis; deamido-NAD(+) from nicotinate D-ribonucleotide: step 1/1. Functionally, catalyzes the reversible adenylation of nicotinate mononucleotide (NaMN) to nicotinic acid adenine dinucleotide (NaAD). The polypeptide is Probable nicotinate-nucleotide adenylyltransferase (Acidithiobacillus ferrooxidans (strain ATCC 23270 / DSM 14882 / CIP 104768 / NCIMB 8455) (Ferrobacillus ferrooxidans (strain ATCC 23270))).